The sequence spans 235 residues: Pyridoxine 5'-phosphate synthase (235 aa).

Position 6 (N6) interacts with 3-amino-2-oxopropyl phosphate. 8–9 (DH) serves as a coordination point for 1-deoxy-D-xylulose 5-phosphate. R17 lines the 3-amino-2-oxopropyl phosphate pocket. H42 functions as the Proton acceptor in the catalytic mechanism. R44 and H49 together coordinate 1-deoxy-D-xylulose 5-phosphate. E69 functions as the Proton acceptor in the catalytic mechanism. 1-deoxy-D-xylulose 5-phosphate is bound at residue T99. Catalysis depends on H189, which acts as the Proton donor. 3-amino-2-oxopropyl phosphate contacts are provided by residues G190 and 211–212 (GH).

The protein belongs to the PNP synthase family. Homooctamer; tetramer of dimers.

The protein resides in the cytoplasm. The enzyme catalyses 3-amino-2-oxopropyl phosphate + 1-deoxy-D-xylulose 5-phosphate = pyridoxine 5'-phosphate + phosphate + 2 H2O + H(+). Its pathway is cofactor biosynthesis; pyridoxine 5'-phosphate biosynthesis; pyridoxine 5'-phosphate from D-erythrose 4-phosphate: step 5/5. In terms of biological role, catalyzes the complicated ring closure reaction between the two acyclic compounds 1-deoxy-D-xylulose-5-phosphate (DXP) and 3-amino-2-oxopropyl phosphate (1-amino-acetone-3-phosphate or AAP) to form pyridoxine 5'-phosphate (PNP) and inorganic phosphate. This Chlorobium chlorochromatii (strain CaD3) protein is Pyridoxine 5'-phosphate synthase.